A 355-amino-acid polypeptide reads, in one-letter code: UDP-N-acetylglucosamine--N-acetylmuramyl-(pentapeptide) pyrophosphoryl-undecaprenol N-acetylglucosamine transferase (355 aa).

UDP-N-acetyl-alpha-D-glucosamine is bound by residues 14–16 (TGG), asparagine 126, arginine 164, serine 190, isoleucine 243, 262–267 (ALTVAE), and glutamine 288.

It belongs to the glycosyltransferase 28 family. MurG subfamily.

It is found in the cell inner membrane. The enzyme catalyses di-trans,octa-cis-undecaprenyl diphospho-N-acetyl-alpha-D-muramoyl-L-alanyl-D-glutamyl-meso-2,6-diaminopimeloyl-D-alanyl-D-alanine + UDP-N-acetyl-alpha-D-glucosamine = di-trans,octa-cis-undecaprenyl diphospho-[N-acetyl-alpha-D-glucosaminyl-(1-&gt;4)]-N-acetyl-alpha-D-muramoyl-L-alanyl-D-glutamyl-meso-2,6-diaminopimeloyl-D-alanyl-D-alanine + UDP + H(+). The protein operates within cell wall biogenesis; peptidoglycan biosynthesis. Cell wall formation. Catalyzes the transfer of a GlcNAc subunit on undecaprenyl-pyrophosphoryl-MurNAc-pentapeptide (lipid intermediate I) to form undecaprenyl-pyrophosphoryl-MurNAc-(pentapeptide)GlcNAc (lipid intermediate II). In Psychromonas ingrahamii (strain DSM 17664 / CCUG 51855 / 37), this protein is UDP-N-acetylglucosamine--N-acetylmuramyl-(pentapeptide) pyrophosphoryl-undecaprenol N-acetylglucosamine transferase.